A 291-amino-acid polypeptide reads, in one-letter code: Trimeric intracellular cation channel type B (291 aa).

At 1–16 (MEYPWDDLTLAFSRTS) the chain is on the lumenal side. Residues 17–33 (MFPFFDIAHYLVSVMAL) traverse the membrane as a helical segment. The Cytoplasmic segment spans residues 34 to 47 (KQRPGAVAAAWSNP). Residues 48 to 69 (LSSWLSAMLHCFGGGILSCILL) form a helical membrane-spanning segment. Residues 70-80 (AEPPLKFLTNH) lie on the Lumenal side of the membrane. The helical transmembrane segment at 81 to 99 (TNILLASSIWYIVFFCPRD) threads the bilayer. The Cytoplasmic segment spans residues 100–103 (LVSQ). The helical transmembrane segment at 104–122 (GYSYQPIQLLAAGMKEVTR) threads the bilayer. Residues Lys-118 and Arg-122 each contribute to the a 1,2-diacyl-sn-glycero-3-phospho-(1D-myo-inositol-4,5-bisphosphate) site. Residues 123-138 (TWKIVGGVAHANGYYR) are Lumenal-facing. Residues 139–156 (NGWIVMIAVGWARGAGGA) form a helical membrane-spanning segment. Residues 157–179 (IITACEQLLKGDWKPEGDEWLKM) lie on the Cytoplasmic side of the membrane. A helical membrane pass occupies residues 180–197 (SFPCKVTLLGSIMFTFQH). At 198 to 206 (TRHLAISKH) the chain is on the lumenal side. A helical transmembrane segment spans residues 207 to 225 (DLMFLYTIFLVTIKVTMMM). Over 226-291 (TKDAAVTLTP…SAKRHAKKED (66 aa)) the chain is Cytoplasmic. Positions 254–291 (LSEKKAEVKPSSNGSASSASKRGTEPPSSAKRHAKKED) are disordered. Over residues 264–273 (SSNGSASSAS) the composition is skewed to low complexity.

Belongs to the TMEM38 family. In terms of assembly, homotrimer; conformation seems to be controled by binding to diacylglycerol (DAG).

The protein localises to the endoplasmic reticulum membrane. It catalyses the reaction K(+)(in) = K(+)(out). Channel activity is activated by increased cytosolic Ca(2+) levels and blocked by luminal high Ca(2+) levels. Functionally, intracellular monovalent cation channel required for maintenance of rapid intracellular calcium release. Acts as a potassium counter-ion channel that functions in synchronization with calcium release from intracellular stores. Activated by increased cytosolic Ca(2+) levels. This chain is Trimeric intracellular cation channel type B (Tmem38b), found in Rattus norvegicus (Rat).